A 305-amino-acid chain; its full sequence is Ribonuclease BN (305 aa).

Zn(2+) is bound by residues His-64, His-66, Asp-68, His-69, His-141, Asp-212, and His-270. Asp-68 functions as the Proton acceptor in the catalytic mechanism.

The protein belongs to the RNase Z family. RNase BN subfamily. As to quaternary structure, homodimer. Zn(2+) is required as a cofactor.

Zinc phosphodiesterase, which has both exoribonuclease and endoribonuclease activities. In Escherichia coli O157:H7, this protein is Ribonuclease BN.